The sequence spans 178 residues: MTTIVSVRRHNHVVIGGDGQVTLGNTVMKGNAKKVRRLHHDKVIAGFAGGTADAFTLFELFEAKLKLCSGQLTKAAVEMAKDWRTDRMLRRLEALLAVADETASLIITGNGDVIQPEDDLIAIGSGGPYAQASARALLENTNLSAREIVEKSLTIAGNICIYTNQYPTIEELKIKTKG.

Residue Thr-2 is part of the active site. Na(+) is bound by residues Gly-157, Cys-160, and Thr-163.

This sequence belongs to the peptidase T1B family. HslV subfamily. As to quaternary structure, a double ring-shaped homohexamer of HslV is capped on each side by a ring-shaped HslU homohexamer. The assembly of the HslU/HslV complex is dependent on binding of ATP.

Its subcellular location is the cytoplasm. The catalysed reaction is ATP-dependent cleavage of peptide bonds with broad specificity.. Allosterically activated by HslU binding. Its function is as follows. Protease subunit of a proteasome-like degradation complex believed to be a general protein degrading machinery. This chain is ATP-dependent protease subunit HslV, found in Hamiltonella defensa subsp. Acyrthosiphon pisum (strain 5AT).